Here is an 82-residue protein sequence, read N- to C-terminus: Mu-conotoxin GVIIJ (82 aa).

A signal peptide spans 1–22 (MKLTCVVIVAALLLTACQLITA). Residues 23–47 (LDCGGTQKHRALRSTIKLSLLRQHR) constitute a propeptide that is removed on maturation. Position 49 is a 6'-bromotryptophan (tryptophan 49). 3 disulfide bridges follow: cysteine 50-cysteine 65, cysteine 57-cysteine 69, and cysteine 64-cysteine 76. A 4-hydroxyproline modification is found at proline 53. Cysteine 71 contributes to the a protein binding site.

Belongs to the conotoxin O1 superfamily. In terms of processing, cys-71 is a key residue that tethers to the channel by covalent attachment, leading to nearly irreversible inhibition (k(off) very low). In order to determine the solution structure without dimerization, this residue was mutated to Cys. As to expression, expressed by the venom duct.

It localises to the secreted. In terms of biological role, mu-conotoxins block voltage-gated sodium channels (Nav). This toxin (GVIIJ(SSG)) blocks Nav1.1/SCN1A (Kd=11 nM), Nav1.2/SCN2A (Kd=11 nM), Nav1.3/SCN3A (Kd=15 nM), Nav1.4/SCN4A (Kd=4.7 nM), Nav1.6/SCN8A (Kd=360 nM) and Nav1.7/SCN9A (Kd=41 nM). It binds the channel at the newly described site 8, which is composed by two surfaces whose one contains a non-disulfide-bonded cysteine (which is free to covalently bind the toxin Cys-71). It is noteworthy that coexpression of subunits beta-2 or beta-4 (but not beta-1 or beta-3) protects rNav1.1-1.7 against block by the toxin, since these subunits (thanks to their extracellular domain) covalently bind to the key cysteine of the channel, thus preventing the covalent binding of the toxin. This chain is Mu-conotoxin GVIIJ, found in Conus geographus (Geography cone).